The primary structure comprises 213 residues: Large ribosomal subunit protein uL3 (213 aa).

Residues 124–151 (KRHGQSRGPMAHGSRYHRRPGSMGSIAP) are disordered.

The protein belongs to the universal ribosomal protein uL3 family. In terms of assembly, part of the 50S ribosomal subunit. Forms a cluster with proteins L14 and L19.

In terms of biological role, one of the primary rRNA binding proteins, it binds directly near the 3'-end of the 23S rRNA, where it nucleates assembly of the 50S subunit. In Geobacillus kaustophilus (strain HTA426), this protein is Large ribosomal subunit protein uL3.